The sequence spans 256 residues: MIQSITSQGLVLYNRNFREDDKLVKIFTEQVGKCMFFVKHAGQSKLAPVIQPLVLARFLLRINDDGLSYIEDYHEVMTFPKINSDLFVMAYATYVAALADASLQDNQQDAPLFAFLQKTLELMEAGLDYQVLTNIFEIQILTRFGISLNFNECVFCHRVGQAFDFSFKYGACLCPEHYHEDERRCHLNPNIPYLLNQFQAIDFETLETISLKPGIKQELRQFMDQLYEEYVGIHLKSKKFIDSLADWGQLLKEEKK.

It belongs to the RecO family.

Functionally, involved in DNA repair and RecF pathway recombination. The sequence is that of DNA repair protein RecO from Streptococcus pneumoniae serotype 19F (strain G54).